The chain runs to 672 residues: Protein OS-9 (672 aa).

Positions 1–26 (MAAEVLLSSLLGLLFLGLLLPARLTG) are cleaved as a signal peptide. Positions 108-230 (APCLLKTKDW…TIRTSRLCPH (123 aa)) constitute an MRH domain. Cysteine 110 and cysteine 123 are joined by a disulfide. Positions 117, 118, and 130 each coordinate a mannooligosaccharide derivative. A glycan (N-linked (GlcNAc...) asparagine) is linked at asparagine 177. 2 cysteine pairs are disulfide-bonded: cysteine 181–cysteine 216 and cysteine 196–cysteine 228. A mannooligosaccharide derivative is bound by residues aspartate 182, arginine 188, glutamate 212, and tyrosine 218. Disordered regions lie at residues 261–355 (RQAE…NVQV), 372–452 (KAAE…LLPS), 511–548 (ENQS…RVRV), and 637–672 (EANK…EFDF). Basic and acidic residues-rich tracts occupy residues 263-281 (AESK…DTDR), 294-310 (PKKE…ESEL), 320-338 (AAAR…HEAA), 372-386 (KAAE…REQP), and 394-409 (PQRE…KDGE). Acidic residues predominate over residues 414 to 435 (MEEEDGDDEEEEEEEEEDEEEQ). The span at 637–652 (EANKERQRQSELESNY) shows a compositional bias: basic and acidic residues. The segment covering 663–672 (DTGDLDEFDF) has biased composition (acidic residues).

It belongs to the OS-9 family. In terms of assembly, component of the HRD1 complex, which comprises at least SYNV1/HRD1, DERL1/2, FAM8A1, HERPUD1/HERP, OS9, SEL1L and UBE2J1. FAM8A1 is stabilized by interaction with SYNV1, which prevents its proteasomal degradation. OS9 and UBE2J1 recruitment to the complex may be mediated by SEL1L. Through this complex, may interact with ERLEC1 and HSPA5. Interacts (via C-terminus) with CPNE6 (via second C2 domain); this interaction occurs in a calcium-dependent manner in vitro. Interacts with CREB3. In terms of processing, N-glycosylated. Post-translationally, intramolecular disulfide bonds.

It localises to the endoplasmic reticulum lumen. Functionally, lectin component of the HRD1 complex, which functions in endoplasmic reticulum (ER) quality control and ER-associated degradation (ERAD). Specifically recognizes and binds improperly folded glycoproteins as well as hyperglycosylated proteins, retain them in the ER, and transfers them to the ubiquitination machinery and promote their degradation. Possible targets include TRPV4 as well as hyperglycosylated HSP90B1. The chain is Protein OS-9 (Os9) from Mus musculus (Mouse).